The primary structure comprises 161 residues: uncharacterized protein (161 aa).

This sequence belongs to the sapovirus VP3 family.

This is an uncharacterized protein from Sapporo virus (strain Human/United Kingdom/Manchester/1993) (Hu/SV/Man/1993/UK).